We begin with the raw amino-acid sequence, 78 residues long: Consomatin Te1 (78 aa).

Residues 1-22 (MQTAYWMMVMMMVWITAPLSEG) form the signal peptide. The propeptide occupies 23–56 (GQLNDVIRGLVPDNLAPQLVLQSLDSRRHPHGIR). Residues C63 and C68 are joined by a disulfide bond. D-tryptophan is present on W65. Residues P69, P70, and P72 each carry the 4-hydroxyproline modification. A propeptide spanning residues 74-78 (RRLGS) is cleaved from the precursor.

It belongs to the conotoxin C superfamily. Consomatin family. As to expression, expressed by the venom duct.

The protein localises to the secreted. Its function is as follows. Moderately activates human somatostatin receptors (SSTR) with a preferential activation of SSTR1 and SSTR4. In vivo, does not cause behavioral changes in mice within a few minutes of intracranial injection, but causes a progressive loss of movement thereafter. Four to five hours after injection, mice recover, even with the highest dose tested. Shows antinociception and antihyperalgesia activities in two mouse models of acute pain, most probably by acting outside the central nervous system. This is Consomatin Te1 from Conus terebra (Sea snail).